The sequence spans 388 residues: RNA binding motif protein, X-linked-like-1 (388 aa).

The RRM domain occupies 8 to 86 (GKLFIGGLNT…KAIKVEQATK (79 aa)). Basic and acidic residues predominate over residues 61–80 (DAKDVARDMNGKSLDGKAIK). Residues 61–388 (DAKDVARDMN…SDRGGGQKQI (328 aa)) form a disordered region. A Glycyl lysine isopeptide (Lys-Gly) (interchain with G-Cter in SUMO2) cross-link involves residue Lys-80. The residue at position 88 (Ser-88) is a Phosphoserine. Pro residues predominate over residues 148-161 (RGPPPRSGGPPPKR). 2 stretches are compositionally biased toward basic and acidic residues: residues 191–212 (PRRE…DGYS) and 238–271 (YTYR…EYSD). A compositionally biased stretch (low complexity) spans 320 to 332 (SRDSYSSSRSDLY). Composition is skewed to basic and acidic residues over residues 333-344 (SSDRDRVGRQER) and 377-388 (SRSDRGGGQKQI).

The protein resides in the nucleus. Functionally, RNA-binding protein which may be involved in pre-mRNA splicing. This Rattus norvegicus (Rat) protein is RNA binding motif protein, X-linked-like-1 (Rbmxl1).